A 303-amino-acid chain; its full sequence is MKITVLGCGALGQLWLSMLHQQDHDVQGWLRVPQPFCSVNVIMLNGESFNRNLTTNDPKHLLQSELLLVCLKAWQVSSAVTALLPKLNPECKILLLHNGMGTQEELPLNEHVFLHGVTTHAARRDGNTIIHVASGMTHIGPTSSVIIDDNHLADTLHQALPDVAWHNDISAACWQKLAVNCVINPLTGLYNCRNGDVQRYPELIERLCAEVASVMEMEGYHTSTESLLSYVNNVIRSTADNTSSLLQDLRSQRHTEIDYITGYLLRRARSHGMALPENARLYELIKRKESDYERIGAGLPGSW.

NADP(+) contacts are provided by residues 7 to 12, Asn-98, and Ala-122; that span reads GCGALG. Asn-98 provides a ligand contact to substrate. Lys-176 (proton donor) is an active-site residue. Substrate is bound by residues Asn-180, Asn-184, Asn-194, and Ser-244. Position 256 (Glu-256) interacts with NADP(+).

Belongs to the ketopantoate reductase family.

It localises to the cytoplasm. It carries out the reaction (R)-pantoate + NADP(+) = 2-dehydropantoate + NADPH + H(+). Its pathway is cofactor biosynthesis; (R)-pantothenate biosynthesis; (R)-pantoate from 3-methyl-2-oxobutanoate: step 2/2. Functionally, catalyzes the NADPH-dependent reduction of ketopantoate into pantoic acid. The chain is 2-dehydropantoate 2-reductase (panE) from Yersinia pestis.